We begin with the raw amino-acid sequence, 398 residues long: Metal tolerance protein 1 (398 aa).

The Cytoplasmic segment spans residues M1–R56. Residues K57–I77 traverse the membrane as a helical segment. The Vacuolar portion of the chain corresponds to K78 to A89. The helical transmembrane segment at H90–W110 threads the bilayer. Residues E111–R122 are Cytoplasmic-facing. The chain crosses the membrane as a helical span at residues I123–V143. The Vacuolar segment spans residues Y144–G159. Residues F160 to L180 form a helical membrane-spanning segment. Over G181 to Y263 the chain is Cytoplasmic. A required for zinc-binding region spans residues H182–H232. Residues H186 to H232 form a disordered region. The segment covering S187 to S202 has biased composition (basic residues). Positions H216–H232 are enriched in basic and acidic residues. Residues L264–W284 form a helical membrane-spanning segment. Over Y285–K290 the chain is Vacuolar. A helical membrane pass occupies residues I291–M311. At I312–R398 the chain is on the cytoplasmic side.

It belongs to the cation diffusion facilitator (CDF) transporter (TC 2.A.4) family. SLC30A subfamily. Ubiquitously expressed at low levels.

The protein resides in the vacuole membrane. In terms of biological role, mediates zinc accumulation in roots and confers resistance to zinc. Involved in sequestration of excess zinc in the cytoplasm into vacuoles to maintain zinc homeostasis. Can also transport cadmium with a low efficiency. The polypeptide is Metal tolerance protein 1 (Arabidopsis thaliana (Mouse-ear cress)).